A 196-amino-acid polypeptide reads, in one-letter code: NAD(P)H-quinone oxidoreductase subunit I (196 aa).

4Fe-4S ferredoxin-type domains follow at residues 55-84 and 95-124; these read GRIHFEFDKCIACEVCVRVCPINLPVVDWE and KHYSIDFGVCIFCGNCVEYCPTNCLSMTEE. 8 residues coordinate [4Fe-4S] cluster: C64, C67, C70, C74, C104, C107, C110, and C114. A disordered region spans residues 170-196; sequence SPHDLPEGSQRSGKRPEEIIEEAEASS.

The protein belongs to the complex I 23 kDa subunit family. In terms of assembly, NDH-1 is composed of at least 11 different subunits. The cofactor is [4Fe-4S] cluster.

The protein localises to the cellular thylakoid membrane. The catalysed reaction is a plastoquinone + NADH + (n+1) H(+)(in) = a plastoquinol + NAD(+) + n H(+)(out). It catalyses the reaction a plastoquinone + NADPH + (n+1) H(+)(in) = a plastoquinol + NADP(+) + n H(+)(out). Its function is as follows. NDH-1 shuttles electrons from an unknown electron donor, via FMN and iron-sulfur (Fe-S) centers, to quinones in the respiratory and/or the photosynthetic chain. The immediate electron acceptor for the enzyme in this species is believed to be plastoquinone. Couples the redox reaction to proton translocation, and thus conserves the redox energy in a proton gradient. The chain is NAD(P)H-quinone oxidoreductase subunit I from Crocosphaera subtropica (strain ATCC 51142 / BH68) (Cyanothece sp. (strain ATCC 51142)).